The chain runs to 382 residues: Queuine tRNA-ribosyltransferase (382 aa).

Residue D93 is the Proton acceptor of the active site. Substrate is bound by residues 93–97, D147, Q191, and G218; that span reads DSGGF. Residues 249 to 255 are RNA binding; it reads GVGKPED. Catalysis depends on D268, which acts as the Nucleophile. The tract at residues 273 to 277 is RNA binding; important for wobble base 34 recognition; sequence TRNAR. The Zn(2+) site is built by C306, C308, C311, and H337.

Belongs to the queuine tRNA-ribosyltransferase family. In terms of assembly, homodimer. Within each dimer, one monomer is responsible for RNA recognition and catalysis, while the other monomer binds to the replacement base PreQ1. Zn(2+) is required as a cofactor.

The catalysed reaction is 7-aminomethyl-7-carbaguanine + guanosine(34) in tRNA = 7-aminomethyl-7-carbaguanosine(34) in tRNA + guanine. It functions in the pathway tRNA modification; tRNA-queuosine biosynthesis. Its function is as follows. Catalyzes the base-exchange of a guanine (G) residue with the queuine precursor 7-aminomethyl-7-deazaguanine (PreQ1) at position 34 (anticodon wobble position) in tRNAs with GU(N) anticodons (tRNA-Asp, -Asn, -His and -Tyr). Catalysis occurs through a double-displacement mechanism. The nucleophile active site attacks the C1' of nucleotide 34 to detach the guanine base from the RNA, forming a covalent enzyme-RNA intermediate. The proton acceptor active site deprotonates the incoming PreQ1, allowing a nucleophilic attack on the C1' of the ribose to form the product. After dissociation, two additional enzymatic reactions on the tRNA convert PreQ1 to queuine (Q), resulting in the hypermodified nucleoside queuosine (7-(((4,5-cis-dihydroxy-2-cyclopenten-1-yl)amino)methyl)-7-deazaguanosine). The protein is Queuine tRNA-ribosyltransferase of Haemophilus influenzae (strain 86-028NP).